Consider the following 157-residue polypeptide: uncharacterized protein (157 aa).

The protein belongs to the MG067/MG068/MG395 family.

This is an uncharacterized protein from Mycoplasma pneumoniae (strain ATCC 29342 / M129 / Subtype 1) (Mycoplasmoides pneumoniae).